A 415-amino-acid chain; its full sequence is Gamma-glutamyl phosphate reductase (415 aa).

This sequence belongs to the gamma-glutamyl phosphate reductase family.

Its subcellular location is the cytoplasm. It carries out the reaction L-glutamate 5-semialdehyde + phosphate + NADP(+) = L-glutamyl 5-phosphate + NADPH + H(+). It participates in amino-acid biosynthesis; L-proline biosynthesis; L-glutamate 5-semialdehyde from L-glutamate: step 2/2. Catalyzes the NADPH-dependent reduction of L-glutamate 5-phosphate into L-glutamate 5-semialdehyde and phosphate. The product spontaneously undergoes cyclization to form 1-pyrroline-5-carboxylate. This chain is Gamma-glutamyl phosphate reductase, found in Oceanobacillus iheyensis (strain DSM 14371 / CIP 107618 / JCM 11309 / KCTC 3954 / HTE831).